A 241-amino-acid chain; its full sequence is DNA repair protein RecO (241 aa).

It belongs to the RecO family.

Its function is as follows. Involved in DNA repair and RecF pathway recombination. This chain is DNA repair protein RecO, found in Xanthomonas campestris pv. campestris (strain B100).